The primary structure comprises 874 residues: Translation initiation factor IF-2 (874 aa).

Residues 1-262 (MEDKNKTIKE…EKSTSDRDFS (262 aa)) form a disordered region. The span at 54 to 63 (SKPPVMPLPL) shows a compositional bias: pro residues. A compositionally biased stretch (basic and acidic residues) spans 83 to 104 (AKREESPGKQDAGRPPRDKDTR). The span at 141–222 (SGGGYQGNRG…NRGPRSGGTG (82 aa)) shows a compositional bias: gly residues. The span at 235 to 244 (LSQSRGSSVT) shows a compositional bias: polar residues. The span at 250–262 (HDKEKSTSDRDFS) shows a compositional bias: basic and acidic residues. The tr-type G domain occupies 369 to 538 (NRPPVVTIMG…LLQAEVMDLK (170 aa)). Residues 378-385 (GHVDHGKT) form a G1 region. 378–385 (GHVDHGKT) contacts GTP. Residues 403–407 (GITQH) form a G2 region. The segment at 424 to 427 (DTPG) is G3. Residues 424 to 428 (DTPGH) and 478 to 481 (NKID) contribute to the GTP site. Positions 478–481 (NKID) are G4. The tract at residues 514 to 516 (SAR) is G5.

This sequence belongs to the TRAFAC class translation factor GTPase superfamily. Classic translation factor GTPase family. IF-2 subfamily.

It is found in the cytoplasm. Functionally, one of the essential components for the initiation of protein synthesis. Protects formylmethionyl-tRNA from spontaneous hydrolysis and promotes its binding to the 30S ribosomal subunits. Also involved in the hydrolysis of GTP during the formation of the 70S ribosomal complex. This is Translation initiation factor IF-2 from Leptospira interrogans serogroup Icterohaemorrhagiae serovar copenhageni (strain Fiocruz L1-130).